Consider the following 222-residue polypeptide: Protein GrpE (222 aa).

The interval M1 to P21 is disordered.

The protein belongs to the GrpE family. In terms of assembly, homodimer.

The protein localises to the cytoplasm. Its function is as follows. Participates actively in the response to hyperosmotic and heat shock by preventing the aggregation of stress-denatured proteins, in association with DnaK and GrpE. It is the nucleotide exchange factor for DnaK and may function as a thermosensor. Unfolded proteins bind initially to DnaJ; upon interaction with the DnaJ-bound protein, DnaK hydrolyzes its bound ATP, resulting in the formation of a stable complex. GrpE releases ADP from DnaK; ATP binding to DnaK triggers the release of the substrate protein, thus completing the reaction cycle. Several rounds of ATP-dependent interactions between DnaJ, DnaK and GrpE are required for fully efficient folding. This is Protein GrpE from Bartonella tribocorum (strain CIP 105476 / IBS 506).